Reading from the N-terminus, the 104-residue chain is MRVKKGDLVEVIAGKDRGKRGKVLRVIPREDRVIVEGINIVHRHMRPTPDMPQGGIVKNEAPIHISNVMLVCPNCDEKTRIGATYLEDGQKVRKCKKCDEVVDK.

The protein belongs to the universal ribosomal protein uL24 family. As to quaternary structure, part of the 50S ribosomal subunit.

Its function is as follows. One of two assembly initiator proteins, it binds directly to the 5'-end of the 23S rRNA, where it nucleates assembly of the 50S subunit. Functionally, one of the proteins that surrounds the polypeptide exit tunnel on the outside of the subunit. The polypeptide is Large ribosomal subunit protein uL24 (Halothermothrix orenii (strain H 168 / OCM 544 / DSM 9562)).